Reading from the N-terminus, the 425-residue chain is UDP-N-acetylglucosamine 1-carboxyvinyltransferase (425 aa).

A phosphoenolpyruvate-binding site is contributed by 24–25 (KN). Arg95 provides a ligand contact to UDP-N-acetyl-alpha-D-glucosamine. Cys119 acts as the Proton donor in catalysis. Cys119 bears the 2-(S-cysteinyl)pyruvic acid O-phosphothioketal mark. UDP-N-acetyl-alpha-D-glucosamine contacts are provided by residues 124–128 (RPVDQ), Asp308, and Val330.

It belongs to the EPSP synthase family. MurA subfamily.

It is found in the cytoplasm. It catalyses the reaction phosphoenolpyruvate + UDP-N-acetyl-alpha-D-glucosamine = UDP-N-acetyl-3-O-(1-carboxyvinyl)-alpha-D-glucosamine + phosphate. The protein operates within cell wall biogenesis; peptidoglycan biosynthesis. Its function is as follows. Cell wall formation. Adds enolpyruvyl to UDP-N-acetylglucosamine. The sequence is that of UDP-N-acetylglucosamine 1-carboxyvinyltransferase from Deinococcus deserti (strain DSM 17065 / CIP 109153 / LMG 22923 / VCD115).